Consider the following 159-residue polypeptide: Large ribosomal subunit protein mL50 (159 aa).

This sequence belongs to the mitochondrion-specific ribosomal protein mL50 family. As to quaternary structure, component of the mitochondrial ribosome large subunit (39S) which comprises a 16S rRNA and about 50 distinct proteins.

It is found in the mitochondrion. The chain is Large ribosomal subunit protein mL50 (Mrpl50) from Mus musculus (Mouse).